The primary structure comprises 432 residues: D-amino acid dehydrogenase (432 aa).

Residue 3 to 17 (VLVLGSGVIGTTTAY) participates in FAD binding.

Belongs to the DadA oxidoreductase family. FAD is required as a cofactor.

The catalysed reaction is a D-alpha-amino acid + A + H2O = a 2-oxocarboxylate + AH2 + NH4(+). The protein operates within amino-acid degradation; D-alanine degradation; NH(3) and pyruvate from D-alanine: step 1/1. Its function is as follows. Oxidative deamination of D-amino acids. In Azotobacter vinelandii (strain DJ / ATCC BAA-1303), this protein is D-amino acid dehydrogenase.